Reading from the N-terminus, the 427-residue chain is Hydroxylamine reductase (427 aa).

Positions 3, 6, 15, and 21 each coordinate [4Fe-4S] cluster. 8 residues coordinate hybrid [4Fe-2O-2S] cluster: His-129, Glu-153, Cys-197, Cys-283, Cys-311, Cys-336, Glu-370, and Lys-372. Cys-283 is subject to Cysteine persulfide.

Belongs to the HCP family. The cofactor is [4Fe-4S] cluster. It depends on hybrid [4Fe-2O-2S] cluster as a cofactor.

It localises to the cytoplasm. It catalyses the reaction A + NH4(+) + H2O = hydroxylamine + AH2 + H(+). Its function is as follows. Catalyzes the reduction of hydroxylamine to form NH(3) and H(2)O. This Moorella thermoacetica (strain ATCC 39073 / JCM 9320) protein is Hydroxylamine reductase.